We begin with the raw amino-acid sequence, 146 residues long: Endoribonuclease YbeY (146 aa).

The Zn(2+) site is built by histidine 108, histidine 112, and histidine 118.

It belongs to the endoribonuclease YbeY family. Requires Zn(2+) as cofactor.

Its subcellular location is the cytoplasm. Single strand-specific metallo-endoribonuclease involved in late-stage 70S ribosome quality control and in maturation of the 3' terminus of the 16S rRNA. The protein is Endoribonuclease YbeY of Onion yellows phytoplasma (strain OY-M).